A 419-amino-acid polypeptide reads, in one-letter code: Methionine aminopeptidase 2 (419 aa).

The interval 1-69 (MSTNSSNPNE…KITAIDNSYP (69 aa)) is disordered. Positions 11-29 (VMEKVQDLKIDDSKPKVDS) are enriched in basic and acidic residues. The segment covering 30 to 41 (EEQPEAESDGES) has biased composition (acidic residues). The span at 48 to 61 (KKKKKKKSKKKKKI) shows a compositional bias: basic residues. H172 provides a ligand contact to substrate. D192, D203, and H272 together coordinate a divalent metal cation. H280 lines the substrate pocket. 2 residues coordinate a divalent metal cation: E305 and E400.

It belongs to the peptidase M24A family. Methionine aminopeptidase eukaryotic type 2 subfamily. Co(2+) serves as cofactor. Requires Zn(2+) as cofactor. It depends on Mn(2+) as a cofactor. The cofactor is Fe(2+).

It is found in the cytoplasm. The catalysed reaction is Release of N-terminal amino acids, preferentially methionine, from peptides and arylamides.. Functionally, cotranslationally removes the N-terminal methionine from nascent proteins. The N-terminal methionine is often cleaved when the second residue in the primary sequence is small and uncharged (Met-Ala-, Cys, Gly, Pro, Ser, Thr, or Val). The chain is Methionine aminopeptidase 2 from Debaryomyces hansenii (strain ATCC 36239 / CBS 767 / BCRC 21394 / JCM 1990 / NBRC 0083 / IGC 2968) (Yeast).